A 250-amino-acid polypeptide reads, in one-letter code: Proteasome subunit alpha type-4 (250 aa).

Belongs to the peptidase T1A family. In terms of assembly, the 26S proteasome consists of a 20S proteasome core and two 19S regulatory subunits. The 20S proteasome core is composed of 28 subunits that are arranged in four stacked rings, resulting in a barrel-shaped structure. The two end rings are each formed by seven alpha subunits, and the two central rings are each formed by seven beta subunits. The catalytic chamber with the active sites is on the inside of the barrel.

It is found in the cytoplasm. It localises to the nucleus. The proteasome is a multicatalytic proteinase complex which is characterized by its ability to cleave peptides with Arg, Phe, Tyr, Leu, and Glu adjacent to the leaving group at neutral or slightly basic pH. The proteasome has an ATP-dependent proteolytic activity. This chain is Proteasome subunit alpha type-4 (PAC1), found in Spinacia oleracea (Spinach).